The primary structure comprises 47 residues: U18-ctenitoxin-Pn1a (47 aa).

5 disulfide bridges follow: Cys-2-Cys-16, Cys-9-Cys-22, Cys-13-Cys-46, Cys-15-Cys-34, and Cys-24-Cys-32.

As to expression, expressed by the venom gland.

The protein resides in the secreted. Neurotoxin. Causes spastic paralysis and death in mice by intracerebroventricular injection at dose levels of 3 ug per mouse. This is U18-ctenitoxin-Pn1a from Phoneutria nigriventer (Brazilian armed spider).